Reading from the N-terminus, the 313-residue chain is Aspartate carbamoyltransferase catalytic subunit (313 aa).

Carbamoyl phosphate is bound by residues arginine 58 and threonine 59. An L-aspartate-binding site is contributed by lysine 86. Carbamoyl phosphate contacts are provided by arginine 108, histidine 136, and glutamine 139. 2 residues coordinate L-aspartate: arginine 169 and arginine 223. The carbamoyl phosphate site is built by glycine 264 and proline 265.

This sequence belongs to the aspartate/ornithine carbamoyltransferase superfamily. ATCase family. In terms of assembly, heterododecamer (2C3:3R2) of six catalytic PyrB chains organized as two trimers (C3), and six regulatory PyrI chains organized as three dimers (R2).

It carries out the reaction carbamoyl phosphate + L-aspartate = N-carbamoyl-L-aspartate + phosphate + H(+). Its pathway is pyrimidine metabolism; UMP biosynthesis via de novo pathway; (S)-dihydroorotate from bicarbonate: step 2/3. Its function is as follows. Catalyzes the condensation of carbamoyl phosphate and aspartate to form carbamoyl aspartate and inorganic phosphate, the committed step in the de novo pyrimidine nucleotide biosynthesis pathway. The chain is Aspartate carbamoyltransferase catalytic subunit from Halothermothrix orenii (strain H 168 / OCM 544 / DSM 9562).